The chain runs to 205 residues: dTTP/UTP pyrophosphatase (205 aa).

Residue Asp-66 is the Proton acceptor of the active site.

The protein belongs to the Maf family. YhdE subfamily. A divalent metal cation is required as a cofactor.

It is found in the cytoplasm. It catalyses the reaction dTTP + H2O = dTMP + diphosphate + H(+). It carries out the reaction UTP + H2O = UMP + diphosphate + H(+). In terms of biological role, nucleoside triphosphate pyrophosphatase that hydrolyzes dTTP and UTP. May have a dual role in cell division arrest and in preventing the incorporation of modified nucleotides into cellular nucleic acids. The protein is dTTP/UTP pyrophosphatase of Anaeromyxobacter sp. (strain Fw109-5).